The primary structure comprises 157 residues: MNPLRRKRLLIILAVLGGVGLALTLALSALKENINLFYTPSQIANGQAPLGTRIRAGGMVEKGSLQRSTDSLDVRFVVTDFNKSVTIAYRGILPDLFREGQGIVALGKLDAQGVVVADEVLAKHDEKYMPPEVSKALRESGQATPAPASMPARQADR.

Topologically, residues 1 to 8 are cytoplasmic; it reads MNPLRRKR. A helical; Signal-anchor for type II membrane protein membrane pass occupies residues 9 to 29; it reads LLIILAVLGGVGLALTLALSA. Topologically, residues 30-157 are periplasmic; sequence LKENINLFYT…ASMPARQADR (128 aa). Residues histidine 124 and tyrosine 128 each contribute to the heme site. Residues 132–157 form a disordered region; it reads EVSKALRESGQATPAPASMPARQADR.

The protein belongs to the CcmE/CycJ family.

It is found in the cell inner membrane. Heme chaperone required for the biogenesis of c-type cytochromes. Transiently binds heme delivered by CcmC and transfers the heme to apo-cytochromes in a process facilitated by CcmF and CcmH. This chain is Cytochrome c-type biogenesis protein CcmE, found in Pseudomonas syringae pv. tomato (strain ATCC BAA-871 / DC3000).